Reading from the N-terminus, the 328-residue chain is DNA-directed RNA polymerase subunit alpha (328 aa).

Residues 1–232 (MSTQGFLKPR…DQISVFAALE (232 aa)) form an alpha N-terminal domain (alpha-NTD) region. An alpha C-terminal domain (alpha-CTD) region spans residues 248-328 (IDPVLLRPVD…NWPPLGLERP (81 aa)).

It belongs to the RNA polymerase alpha chain family. As to quaternary structure, homodimer. The RNAP catalytic core consists of 2 alpha, 1 beta, 1 beta' and 1 omega subunit. When a sigma factor is associated with the core the holoenzyme is formed, which can initiate transcription.

It catalyses the reaction RNA(n) + a ribonucleoside 5'-triphosphate = RNA(n+1) + diphosphate. Functionally, DNA-dependent RNA polymerase catalyzes the transcription of DNA into RNA using the four ribonucleoside triphosphates as substrates. This is DNA-directed RNA polymerase subunit alpha from Bordetella bronchiseptica (strain ATCC BAA-588 / NCTC 13252 / RB50) (Alcaligenes bronchisepticus).